The sequence spans 65 residues: Large ribosomal subunit protein bL35 (65 aa).

The span at 1–10 (MPKMKTDRGA) shows a compositional bias: basic and acidic residues. The segment at 1–24 (MPKMKTDRGAAKRFKKTGSGGFKC) is disordered.

It belongs to the bacterial ribosomal protein bL35 family.

In Tolumonas auensis (strain DSM 9187 / NBRC 110442 / TA 4), this protein is Large ribosomal subunit protein bL35.